The following is a 291-amino-acid chain: Glycine--tRNA ligase alpha subunit (291 aa).

The protein belongs to the class-II aminoacyl-tRNA synthetase family. As to quaternary structure, tetramer of two alpha and two beta subunits.

It is found in the cytoplasm. It catalyses the reaction tRNA(Gly) + glycine + ATP = glycyl-tRNA(Gly) + AMP + diphosphate. The polypeptide is Glycine--tRNA ligase alpha subunit (Microcystis aeruginosa (strain NIES-843 / IAM M-2473)).